Reading from the N-terminus, the 349-residue chain is Carbamoyl phosphate synthase small chain (349 aa).

Residues M1–K170 are CPSase. S45, G218, and G220 together coordinate L-glutamine. In terms of domain architecture, Glutamine amidotransferase type-1 spans K170–L349. C245 serves as the catalytic Nucleophile. L246, Q249, N287, G289, and Y290 together coordinate L-glutamine. Residues H327 and E329 contribute to the active site.

The protein belongs to the CarA family. In terms of assembly, composed of two chains; the small (or glutamine) chain promotes the hydrolysis of glutamine to ammonia, which is used by the large (or ammonia) chain to synthesize carbamoyl phosphate. Tetramer of heterodimers (alpha,beta)4.

It carries out the reaction hydrogencarbonate + L-glutamine + 2 ATP + H2O = carbamoyl phosphate + L-glutamate + 2 ADP + phosphate + 2 H(+). It catalyses the reaction L-glutamine + H2O = L-glutamate + NH4(+). Its pathway is amino-acid biosynthesis; L-arginine biosynthesis; carbamoyl phosphate from bicarbonate: step 1/1. The protein operates within pyrimidine metabolism; UMP biosynthesis via de novo pathway; (S)-dihydroorotate from bicarbonate: step 1/3. Functionally, small subunit of the glutamine-dependent carbamoyl phosphate synthetase (CPSase). CPSase catalyzes the formation of carbamoyl phosphate from the ammonia moiety of glutamine, carbonate, and phosphate donated by ATP, constituting the first step of 2 biosynthetic pathways, one leading to arginine and/or urea and the other to pyrimidine nucleotides. The small subunit (glutamine amidotransferase) binds and cleaves glutamine to supply the large subunit with the substrate ammonia. The protein is Carbamoyl phosphate synthase small chain of Clostridium perfringens (strain 13 / Type A).